The primary structure comprises 457 residues: Dihydrolipoyllysine-residue acetyltransferase component of pyruvate dehydrogenase complex, mitochondrial (457 aa).

Residues 1–30 (MLSAALRRRVLAPTHSALRTGFAAHVVRHY) constitute a mitochondrion transit peptide. A Lipoyl-binding domain is found at 36 to 112 (HQVIKMPALS…PVGSPIAVLV (77 aa)). Residue lysine 77 is modified to N6-lipoyllysine. The disordered stretch occupies residues 129-168 (AGGDAAKPAAPKKEEKSESKSESASAPEPTPEPQQYQSQG). Basic and acidic residues predominate over residues 139 to 149 (PKKEEKSESKS). Lysine 148 carries the post-translational modification N6-crotonyllysine. The 38-residue stretch at 179-216 (NISASAKRLAREKGISIDGLKGTGKNGQITEEDVKKAI) folds into the Peripheral subunit-binding (PSBD) domain. Catalysis depends on residues histidine 430 and aspartate 434.

It belongs to the 2-oxoacid dehydrogenase family. Eukaryotic pyruvate dehydrogenase (PDH) complexes are organized as a core consisting of the oligomeric dihydrolipoamide acetyl-transferase (E2), around which are arranged multiple copies of pyruvate dehydrogenase (E1), dihydrolipoamide dehydrogenase (E3) and protein X (E3BP) bound by non-covalent bonds. Interacts with SIR5; the interaction is direct. (R)-lipoate serves as cofactor. Decrotonylated at 'Lys-148' by SIR5, which inhibits the activity of the pyruvate dehydrogenase complex (PDC).

Its subcellular location is the mitochondrion matrix. The enzyme catalyses N(6)-[(R)-dihydrolipoyl]-L-lysyl-[protein] + acetyl-CoA = N(6)-[(R)-S(8)-acetyldihydrolipoyl]-L-lysyl-[protein] + CoA. Functionally, the pyruvate dehydrogenase complex catalyzes the overall conversion of pyruvate to acetyl-CoA and CO(2). High pyruvate dehydrogenase complex activity is required for sufficient energy production during germination of conidia. The chain is Dihydrolipoyllysine-residue acetyltransferase component of pyruvate dehydrogenase complex, mitochondrial from Fusarium oxysporum f. sp. lycopersici (strain 4287 / CBS 123668 / FGSC 9935 / NRRL 34936) (Fusarium vascular wilt of tomato).